The sequence spans 303 residues: DnaJ homolog subfamily C member 17 (303 aa).

Residues 11 to 76 (DLYALLGIEE…AARAAYDKVR (66 aa)) form the J domain. Disordered regions lie at residues 104-123 (ERQA…SATT) and 150-170 (IRQD…GKGT). Serine 112 carries the phosphoserine modification. Residues 150 to 166 (IRQDREQRLRGRTENTE) are compositionally biased toward basic and acidic residues. In terms of domain architecture, RRM spans 178 to 249 (KCKKEDESQG…NPLKVSWLEG (72 aa)). An N6-methyllysine modification is found at lysine 264.

In terms of tissue distribution, expressed in the thyroid gland.

Its subcellular location is the cytoplasm. The protein localises to the nucleus. Functionally, may negatively affect PAX8-induced thyroglobulin/TG transcription. This chain is DnaJ homolog subfamily C member 17 (Dnajc17), found in Mus musculus (Mouse).